The sequence spans 248 residues: MSSSTRVGLKEQLHPLIRDLATGIEATWQRWLNLEPYAAMPADLGYIEGKLEGERLQIENRCYQSREFRKLHLELARVGNNLDILHCVLFPRTTFDLPMFGADLVGGRGQISAAIVDLSPTTIARELSNDYIAGLTALPNPTFQGLRELPTWGDIFSSFCLFIRPGSPEEEAAFLDRALGFLQVHCQQAAAATALTDPEAIATVLEQQRYYCEQQRRNDKTRRVLEKAFGDDWADRYMTTMLFDLPSD.

This sequence belongs to the HY2 family.

The enzyme catalyses (2R,3Z)-phycocyanobilin + 4 oxidized [2Fe-2S]-[ferredoxin] = biliverdin IXalpha + 4 reduced [2Fe-2S]-[ferredoxin] + 4 H(+). In terms of biological role, catalyzes the four-electron reduction of biliverdin IX-alpha (2-electron reduction at both the A and D rings); the reaction proceeds via an isolatable 2-electron intermediate, 181,182-dihydrobiliverdin. This is Phycocyanobilin:ferredoxin oxidoreductase from Synechococcus sp. (strain ATCC 27144 / PCC 6301 / SAUG 1402/1) (Anacystis nidulans).